Here is a 224-residue protein sequence, read N- to C-terminus: Thiamine-phosphate synthase (224 aa).

4-amino-2-methyl-5-(diphosphooxymethyl)pyrimidine-binding positions include 44–48 (QFREK) and N79. Mg(2+) is bound by residues D80 and D99. 4-amino-2-methyl-5-(diphosphooxymethyl)pyrimidine is bound at residue S117. A 2-[(2R,5Z)-2-carboxy-4-methylthiazol-5(2H)-ylidene]ethyl phosphate-binding site is contributed by 143 to 145 (TET). K146 serves as a coordination point for 4-amino-2-methyl-5-(diphosphooxymethyl)pyrimidine. 2-[(2R,5Z)-2-carboxy-4-methylthiazol-5(2H)-ylidene]ethyl phosphate is bound by residues G175 and 195–196 (IS).

Belongs to the thiamine-phosphate synthase family. Requires Mg(2+) as cofactor.

The catalysed reaction is 2-[(2R,5Z)-2-carboxy-4-methylthiazol-5(2H)-ylidene]ethyl phosphate + 4-amino-2-methyl-5-(diphosphooxymethyl)pyrimidine + 2 H(+) = thiamine phosphate + CO2 + diphosphate. The enzyme catalyses 2-(2-carboxy-4-methylthiazol-5-yl)ethyl phosphate + 4-amino-2-methyl-5-(diphosphooxymethyl)pyrimidine + 2 H(+) = thiamine phosphate + CO2 + diphosphate. It catalyses the reaction 4-methyl-5-(2-phosphooxyethyl)-thiazole + 4-amino-2-methyl-5-(diphosphooxymethyl)pyrimidine + H(+) = thiamine phosphate + diphosphate. The protein operates within cofactor biosynthesis; thiamine diphosphate biosynthesis; thiamine phosphate from 4-amino-2-methyl-5-diphosphomethylpyrimidine and 4-methyl-5-(2-phosphoethyl)-thiazole: step 1/1. Its function is as follows. Condenses 4-methyl-5-(beta-hydroxyethyl)thiazole monophosphate (THZ-P) and 2-methyl-4-amino-5-hydroxymethyl pyrimidine pyrophosphate (HMP-PP) to form thiamine monophosphate (TMP). The chain is Thiamine-phosphate synthase from Bacillus velezensis (strain DSM 23117 / BGSC 10A6 / LMG 26770 / FZB42) (Bacillus amyloliquefaciens subsp. plantarum).